Consider the following 331-residue polypeptide: Ribose-phosphate pyrophosphokinase (331 aa).

An ATP-binding site is contributed by 55–57; the sequence is DGE. Histidine 148 and aspartate 187 together coordinate Mg(2+). Lysine 211 is a catalytic residue. Residues arginine 213, aspartate 237, and 241–245 each bind D-ribose 5-phosphate; that span reads DTGGT.

It belongs to the ribose-phosphate pyrophosphokinase family. Class I subfamily. In terms of assembly, homohexamer. The cofactor is Mg(2+).

It is found in the cytoplasm. It catalyses the reaction D-ribose 5-phosphate + ATP = 5-phospho-alpha-D-ribose 1-diphosphate + AMP + H(+). It participates in metabolic intermediate biosynthesis; 5-phospho-alpha-D-ribose 1-diphosphate biosynthesis; 5-phospho-alpha-D-ribose 1-diphosphate from D-ribose 5-phosphate (route I): step 1/1. In terms of biological role, involved in the biosynthesis of the central metabolite phospho-alpha-D-ribosyl-1-pyrophosphate (PRPP) via the transfer of pyrophosphoryl group from ATP to 1-hydroxyl of ribose-5-phosphate (Rib-5-P). The polypeptide is Ribose-phosphate pyrophosphokinase (Prochlorococcus marinus subsp. pastoris (strain CCMP1986 / NIES-2087 / MED4)).